Here is a 479-residue protein sequence, read N- to C-terminus: Aspartyl/glutamyl-tRNA(Asn/Gln) amidotransferase subunit B (479 aa).

Belongs to the GatB/GatE family. GatB subfamily. Heterotrimer of A, B and C subunits.

The catalysed reaction is L-glutamyl-tRNA(Gln) + L-glutamine + ATP + H2O = L-glutaminyl-tRNA(Gln) + L-glutamate + ADP + phosphate + H(+). It catalyses the reaction L-aspartyl-tRNA(Asn) + L-glutamine + ATP + H2O = L-asparaginyl-tRNA(Asn) + L-glutamate + ADP + phosphate + 2 H(+). Functionally, allows the formation of correctly charged Asn-tRNA(Asn) or Gln-tRNA(Gln) through the transamidation of misacylated Asp-tRNA(Asn) or Glu-tRNA(Gln) in organisms which lack either or both of asparaginyl-tRNA or glutaminyl-tRNA synthetases. The reaction takes place in the presence of glutamine and ATP through an activated phospho-Asp-tRNA(Asn) or phospho-Glu-tRNA(Gln). The polypeptide is Aspartyl/glutamyl-tRNA(Asn/Gln) amidotransferase subunit B (Alcanivorax borkumensis (strain ATCC 700651 / DSM 11573 / NCIMB 13689 / SK2)).